Reading from the N-terminus, the 418-residue chain is Histidine--tRNA ligase (418 aa).

Belongs to the class-II aminoacyl-tRNA synthetase family.

It is found in the cytoplasm. The enzyme catalyses tRNA(His) + L-histidine + ATP = L-histidyl-tRNA(His) + AMP + diphosphate + H(+). The polypeptide is Histidine--tRNA ligase (Methanococcus maripaludis (strain C7 / ATCC BAA-1331)).